A 274-amino-acid chain; its full sequence is Momilactone A synthase (274 aa).

The protein belongs to the short-chain dehydrogenases/reductases (SDR) family.

The catalysed reaction is 3beta-hydroxy-9beta-pimara-7,15-dien-19,6beta-olide + NAD(+) = momilactone A + NADH + H(+). The enzyme catalyses 3beta-hydroxy-9beta-pimara-7,15-dien-19,6beta-olide + NADP(+) = momilactone A + NADPH + H(+). Involved in momilactone phytoalexins biosynthesis. Catalyzes the last step of momilactone A biosynthesis. This is Momilactone A synthase from Oryza sativa subsp. japonica (Rice).